We begin with the raw amino-acid sequence, 359 residues long: 4-hydroxyproline 2-epimerase (359 aa).

The active-site Proton acceptor is C126. Substrate-binding positions include 127 to 128 (GH), H248, and D274. C278 serves as the catalytic Proton donor. 279 to 280 (GT) provides a ligand contact to substrate.

It belongs to the proline racemase family.

It catalyses the reaction trans-4-hydroxy-L-proline = cis-4-hydroxy-D-proline. Catalyzes the epimerization of trans-4-hydroxy-L-proline (t4LHyp) to cis-4-hydroxy-D-proline (c4DHyp). Is likely involved in a degradation pathway that converts t4LHyp to alpha-ketoglutarate. Displays no proline racemase activity. This chain is 4-hydroxyproline 2-epimerase, found in Planctopirus limnophila (strain ATCC 43296 / DSM 3776 / IFAM 1008 / Mu 290) (Planctomyces limnophilus).